Here is a 196-residue protein sequence, read N- to C-terminus: V-type proton ATPase proteolipid subunit (196 aa).

Residues 1–25 (MFQLLSFLLSGEATAVERIITDACP) are Lumenal-facing. The helical transmembrane segment at 26 to 46 (VYAPFFGAMGVTAALVFTVMG) threads the bilayer. Over 47–72 (AAYGTAKASVGISNMGVMKPDLVIKA) the chain is Cytoplasmic. The helical transmembrane segment at 73 to 93 (FIPVIFAGVIAIYGLIICVIL) threads the bilayer. The Lumenal segment spans residues 94–111 (VGGIKPNANYTLMKSFTD). A helical membrane pass occupies residues 112–132 (LGAGLTVGLCGLAAGMAIGIV). At 133-150 (GDSGVRAFGQQPKLYVIM) the chain is on the cytoplasmic side. The helical transmembrane segment at 151–171 (MLILIFSEALGLYGLIIGILL) threads the bilayer. Residues 172 to 196 (SSVSDTYCPGQALVPLNSGNVIGKN) are Lumenal-facing.

This sequence belongs to the V-ATPase proteolipid subunit family. In terms of assembly, V-ATPase is a heteromultimeric enzyme composed of a peripheral catalytic V1 complex (main components: subunits A, B, C, D, E, and F) attached to an integral membrane V0 proton pore complex (main component: the proteolipid protein; which is present as a hexamer that forms the proton-conducting pore).

It is found in the vacuole membrane. In terms of biological role, proton-conducting pore forming subunit of the membrane integral V0 complex of vacuolar ATPase. V-ATPase is responsible for acidifying a variety of intracellular compartments in eukaryotic cells. This is V-type proton ATPase proteolipid subunit (vatP) from Dictyostelium discoideum (Social amoeba).